The sequence spans 194 residues: Imidazoleglycerol-phosphate dehydratase (194 aa).

It belongs to the imidazoleglycerol-phosphate dehydratase family.

It is found in the cytoplasm. It catalyses the reaction D-erythro-1-(imidazol-4-yl)glycerol 3-phosphate = 3-(imidazol-4-yl)-2-oxopropyl phosphate + H2O. It functions in the pathway amino-acid biosynthesis; L-histidine biosynthesis; L-histidine from 5-phospho-alpha-D-ribose 1-diphosphate: step 6/9. This chain is Imidazoleglycerol-phosphate dehydratase, found in Bacillus licheniformis (strain ATCC 14580 / DSM 13 / JCM 2505 / CCUG 7422 / NBRC 12200 / NCIMB 9375 / NCTC 10341 / NRRL NRS-1264 / Gibson 46).